The chain runs to 108 residues: Urease subunit gamma (108 aa).

The protein belongs to the urease gamma subunit family. Heterotrimer of UreA (gamma), UreB (beta) and UreC (alpha) subunits. Three heterotrimers associate to form the active enzyme.

The protein localises to the cytoplasm. The enzyme catalyses urea + 2 H2O + H(+) = hydrogencarbonate + 2 NH4(+). Its pathway is nitrogen metabolism; urea degradation; CO(2) and NH(3) from urea (urease route): step 1/1. The sequence is that of Urease subunit gamma from Trichodesmium erythraeum (strain IMS101).